Reading from the N-terminus, the 305-residue chain is tRNA uridine(34) hydroxylase (305 aa).

In terms of domain architecture, Rhodanese spans 126–220 (SDPEVIVIDT…YLEQIPPEES (95 aa)). Cys-180 acts as the Cysteine persulfide intermediate in catalysis.

It belongs to the TrhO family.

It carries out the reaction uridine(34) in tRNA + AH2 + O2 = 5-hydroxyuridine(34) in tRNA + A + H2O. Catalyzes oxygen-dependent 5-hydroxyuridine (ho5U) modification at position 34 in tRNAs. This chain is tRNA uridine(34) hydroxylase, found in Trichormus variabilis (strain ATCC 29413 / PCC 7937) (Anabaena variabilis).